The sequence spans 391 residues: Methylthioribose-1-phosphate isomerase (391 aa).

Asp-267 (proton donor) is an active-site residue.

The protein belongs to the eIF-2B alpha/beta/delta subunits family. MtnA subfamily.

The protein resides in the cytoplasm. The protein localises to the nucleus. The enzyme catalyses 5-(methylsulfanyl)-alpha-D-ribose 1-phosphate = 5-(methylsulfanyl)-D-ribulose 1-phosphate. The protein operates within amino-acid biosynthesis; L-methionine biosynthesis via salvage pathway; L-methionine from S-methyl-5-thio-alpha-D-ribose 1-phosphate: step 1/6. Functionally, catalyzes the interconversion of methylthioribose-1-phosphate (MTR-1-P) into methylthioribulose-1-phosphate (MTRu-1-P). In Ajellomyces capsulatus (strain NAm1 / WU24) (Darling's disease fungus), this protein is Methylthioribose-1-phosphate isomerase.